The following is a 468-amino-acid chain: 6-phospho-beta-galactosidase (468 aa).

5 residues coordinate D-galactose 6-phosphate: Gln19, His116, Asn159, Glu160, and Asn297. Glu160 serves as the catalytic Proton donor. Glu375 serves as the catalytic Nucleophile. The D-galactose 6-phosphate site is built by Ser428, Trp429, Lys435, and Tyr437.

It belongs to the glycosyl hydrolase 1 family.

The catalysed reaction is a 6-phospho-beta-D-galactoside + H2O = D-galactose 6-phosphate + an alcohol. The protein operates within carbohydrate metabolism; lactose degradation; D-galactose 6-phosphate and beta-D-glucose from lactose 6-phosphate: step 1/1. In Streptococcus pyogenes serotype M4 (strain MGAS10750), this protein is 6-phospho-beta-galactosidase.